A 185-amino-acid chain; its full sequence is Ribosome-recycling factor (185 aa).

The protein belongs to the RRF family.

The protein localises to the cytoplasm. Its function is as follows. Responsible for the release of ribosomes from messenger RNA at the termination of protein biosynthesis. May increase the efficiency of translation by recycling ribosomes from one round of translation to another. The sequence is that of Ribosome-recycling factor from Zymomonas mobilis subsp. mobilis (strain ATCC 31821 / ZM4 / CP4).